We begin with the raw amino-acid sequence, 105 residues long: NADH dehydrogenase [ubiquinone] 1 beta subcomplex subunit 2, mitochondrial (105 aa).

The N-terminal 33 residues, 1-33, are a transit peptide targeting the mitochondrion; that stretch reads MSALTRLASFARVGGRLFRSGCARTAGDGGVRH. Residues 85-105 are disordered; the sequence is PYPDPSQWTDEELGIPPDDED. The span at 93–105 shows a compositional bias: acidic residues; sequence TDEELGIPPDDED.

This sequence belongs to the complex I NDUFB2 subunit family. Complex I is composed of 45 different subunits.

Its subcellular location is the mitochondrion inner membrane. Its function is as follows. Accessory subunit of the mitochondrial membrane respiratory chain NADH dehydrogenase (Complex I), that is believed not to be involved in catalysis. Complex I functions in the transfer of electrons from NADH to the respiratory chain. The immediate electron acceptor for the enzyme is believed to be ubiquinone. This chain is NADH dehydrogenase [ubiquinone] 1 beta subcomplex subunit 2, mitochondrial (NDUFB2), found in Homo sapiens (Human).